A 326-amino-acid chain; its full sequence is Adenosine receptor A1 (326 aa).

Over 1–10 the chain is Extracellular; sequence MPPYISAFQA. Residues 11–33 traverse the membrane as a helical segment; that stretch reads AYIGIEVLIALVSVPGNVLVIWA. Topologically, residues 34-46 are cytoplasmic; it reads VKVNQALRDATFC. The chain crosses the membrane as a helical span at residues 47–69; the sequence is FIVSLAVADVAVGALVIPLAILI. Residues 70–80 lie on the Extracellular side of the membrane; the sequence is NIGPQTYFHTC. Cys80 and Cys169 are oxidised to a cystine. A helical transmembrane segment spans residues 81-102; it reads LMVACPVLILTQSSILALLAIA. The Cytoplasmic portion of the chain corresponds to 103–123; the sequence is VDRYLRVKIPLRYKTVVTQRR. Residues 124–146 traverse the membrane as a helical segment; sequence AAVAIAGCWILSLVVGLTPMFGW. Topologically, residues 147–176 are extracellular; sequence NNLSVVEQDWRANGSVGEPVIKCEFEKVIS. Asn148 and Asn159 each carry an N-linked (GlcNAc...) asparagine glycan. The chain crosses the membrane as a helical span at residues 177-201; sequence MEYMVYFNFFVWVLPPLLLMVLIYL. At 202–235 the chain is on the cytoplasmic side; the sequence is EVFYLIRKQLNKKVSASSGDPQKYYGKELKIAKS. A helical membrane pass occupies residues 236–259; that stretch reads LALILFLFALSWLPLHILNCITLF. Residues 260-267 are Extracellular-facing; sequence CPTCQKPS. Residues 268–292 form a helical membrane-spanning segment; sequence ILIYIAIFLTHGNSAMNPIVYAFRI. The Cytoplasmic segment spans residues 293-326; it reads HKFRVTFLKIWNDHFRCQPKPPIDEDLPEEKAED. Cys309 is lipidated: S-palmitoyl cysteine.

This sequence belongs to the G-protein coupled receptor 1 family. Widely expressed in brain and spinal cord.

It is found in the cell membrane. Its function is as follows. Receptor for adenosine. The activity of this receptor is mediated by G proteins which inhibit adenylyl cyclase. The chain is Adenosine receptor A1 (Adora1) from Rattus norvegicus (Rat).